Consider the following 1188-residue polypeptide: Oxysterol-binding protein homolog 1 (1188 aa).

3 ANK repeats span residues 51-80 (VLHLMLHYAVQVAPMAVIKEIVHHWVSTTN), 96-125 (NGNTPLHIAAYQSRGDIVAFLLDQPTINDC), and 196-225 (TGDTVLHEFVKKRDVIMCRWLLEHGADPFK). The PH domain occupies 330–379 (MSSCSLHLDSSEKLKFEIIGGNNGVIRWHLKGNHPIETNRWVWAIQGAIR). A Phosphoserine modification is found at S394. Disordered regions lie at residues 415 to 546 (ATSK…GDED) and 661 to 692 (QKKLNNQPQVETEANEESDDANSMIKGSQEST). The segment covering 424–433 (PHLSKSTLTQ) has biased composition (polar residues). A compositionally biased stretch (low complexity) spans 443–462 (TNNNNNKSNNDYDDNNNNNN). Acidic residues predominate over residues 463–473 (NDDDDYDDDDE). Phosphoserine occurs at positions 490 and 500. Residues 514–529 (PSDDEGYSEDDSDDDG) are compositionally biased toward acidic residues. A phosphoserine mark is found at S678, S683, and S691. Phosphothreonine occurs at positions 692 and 694. S708 and S712 each carry phosphoserine. Positions 716-722 (EFFDAEE) match the FFAT motif. The segment at 721-755 (EEAASDKKANDSEDLTTNKETPANAKPQEEAPEDE) is disordered. Positions 800-1174 (LWSVLKSMVG…YWKFNGEYWN (375 aa)) are OSBP-related domain (ORD). Positions 834 and 962 each coordinate ergosterol.

Belongs to the OSBP family. Interacts with NVJ1. Interacts with the AAA ATPase AFG2; regulates OSH1 membrane association. AFG2 is required for membrane dissociation of OSH1. Interacts with SCS2.

It localises to the golgi apparatus membrane. The protein localises to the nucleus outer membrane. The protein resides in the endoplasmic reticulum membrane. Its subcellular location is the vacuole membrane. Lipid transport protein (LTP) involved in non-vesicular transfer of lipids between membranes. Functions in phosphoinositide-coupled directional transport of various lipids by carrying the lipid molecule in a hydrophobic pocket and transferring it between membranes through the cytosol. Involved in maintenance of intracellular sterol distribution and homeostasis. Involved in non-vesicular transport of ergosterol and PI(4)P at the NVJ. Binds sterol and PI4P in a mutually exclusive manner. May be involved in formation of PMN vesicles by altering the membrane lipid composition. The sequence is that of Oxysterol-binding protein homolog 1 from Saccharomyces cerevisiae (strain ATCC 204508 / S288c) (Baker's yeast).